A 117-amino-acid chain; its full sequence is Transcription elongation factor SPT4 (117 aa).

The interaction with SUPT5H stretch occupies residues 1 to 40; it reads MSLETVPKDLRHLRACLLCSLVKTIDQFEYDGCDNCESYL. The C4-type zinc finger occupies 16-36; sequence CLLCSLVKTIDQFEYDGCDNC.

The protein belongs to the SPT4 family. In terms of assembly, interacts with SUPT5H to form the DSIF complex. DSIF interacts with RNA polymerase II and with the positive transcription elongation factor b complex (P-TEFb complex), which is composed of CDK9 and cyclin-T.

The protein localises to the nucleus. In terms of biological role, may function as a component of the DRB sensitivity-inducing factor complex (DSIF complex), which regulates transcription elongation by RNA polymerase II. Probably enhances transcriptional pausing at sites proximal to the promoter, which may facilitate the assembly of an elongation competent RNA polymerase II complex. Also acts to stimulate transcriptional elongation at low nucleotide concentrations. Regulation of transcriptional elongation by this protein is required for the expression of genes which control neuronal development. This chain is Transcription elongation factor SPT4 (supt4h1), found in Danio rerio (Zebrafish).